The chain runs to 172 residues: Interferon tau-3 (172 aa).

Intrachain disulfides connect Cys1–Cys99 and Cys29–Cys139. A glycan (N-linked (GlcNAc...) asparagine) is linked at Asn78.

The protein belongs to the alpha/beta interferon family. IFN-alphaII subfamily. Constitutively and exclusively expressed in the mononuclear cells of the extraembryonic trophectoderm.

The protein resides in the secreted. In terms of biological role, paracrine hormone primarily responsible for maternal recognition of pregnancy. Interacts with endometrial receptors, probably type I interferon receptors, and blocks estrogen receptor expression, preventing the estrogen-induced increase in oxytocin receptor expression in the endometrium. This results in the suppression of the pulsatile endometrial release of the luteolytic hormone prostaglandin F2-alpha, hindering the regression of the corpus luteum (luteolysis) and therefore a return to ovarian cyclicity. This, and a possible direct effect of IFN-tau on prostaglandin synthesis, leads in turn to continued ovarian progesterone secretion, which stimulates the secretion by the endometrium of the nutrients required for the growth of the conceptus. In summary, displays particularly high antiviral and antiproliferative potency concurrently with particular weak cytotoxicity, high antiluteolytic activity and immunomodulatory properties. In contrast with other IFNs, IFN-tau is not virally inducible. The chain is Interferon tau-3 (IFNT3) from Bos taurus (Bovine).